Consider the following 913-residue polypeptide: Protein ECT2 (913 aa).

An N-acetylalanine modification is found at A2. 2 consecutive BRCT domains span residues 176-260 and 266-354; these read MLNL…AAVD and FKVP…MYLY. At T359 the chain carries Phosphothreonine; by PKC/PRKCI. A phosphoserine mark is found at S367 and S370. T373 is modified (phosphothreonine). S376 bears the Phosphoserine mark. Short sequence motifs (nuclear localization signal) lie at residues 378–382 and 401–405; these read RKRRR and PRKRP. Disordered regions lie at residues 389–415 and 427–450; these read QLSRETDLSPFPPRKRPSAEHSLSIGS and IHYGETPKSCAKSSRSSTPVPPKQ. Position 444 is a phosphothreonine; by CDK1 (T444). A DH domain is found at 452–641; the sequence is ARWQVAKELY…KEVMTHINED (190 aa). K611 is covalently cross-linked (Glycyl lysine isopeptide (Lys-Gly) (interchain with G-Cter in SUMO2)). The region spanning 675–794 is the PH domain; that stretch reads RVETVSLGEH…KMLCRHVANT (120 aa). A phosphoserine mark is found at S716 and S842. Phosphothreonine; by CDK1 is present on T846. A disordered region spans residues 853–874; the sequence is MALSSSHSSEGRSPPSSGKLAV. Residues 856-870 show a composition bias toward low complexity; that stretch reads SSSHSSEGRSPPSSG. Phosphoserine is present on residues S861 and S865.

As to quaternary structure, homodimer. Homooligomer. Found in the centralspindlin complex. Interacts with NR1I3. Interacts (Thr-359 phosphorylated form) with PARD6A; the interaction is observed in cancer cells. Interacts (Thr-359 phosphorylated form) with PRKCI; the interaction is observed in cancer cells. Interacts with PKP4; the interaction is observed at the midbody. Interacts with RACGAP1; the interaction is direct, occurs in a microtubule-dependent manner, occurs at anaphase and during cytokinesis, is inhibited in metaphase by phosphorylation of ECT2 on Thr-373 and is stimulated in early anaphase by dephosphorylation of ECT2 probably on Thr-373 through CDK1 activity. Interacts with PLK1; the interaction is stimulated upon its phosphorylation on Thr-444. Interacts with RHOA; the interaction results in allosteric activation of ECT2. Interacts with KIF23, PARD3, PARD6B and PRKCQ. Interacts with NEDD9/HEF1. Post-translationally, phosphorylated by PLK1 in vitro. Hyperphosphorylated during the G2 phase of the cell cycle. Phosphorylation at Thr-373 occurs during the G2/M phase, relieves its auto-inhibition status and stimulates its GEF activity. Phosphorylation at Thr-444 in G2/M phase is required for subsequent binding with PLK1 and Rho exchange activation. Dephosphorylated at the time of cytokinesis. Phosphorylation at Thr-359 is required for its transformation activity in cancer cells. In terms of tissue distribution, highest expression in testis. Also detectable in brain, kidney, liver and spleen.

It is found in the nucleus. It localises to the cytoplasm. The protein resides in the cytoskeleton. Its subcellular location is the spindle. The protein localises to the cleavage furrow. It is found in the midbody. It localises to the cell junction. The protein resides in the tight junction. Autoinhibited by the C-terminal PH domain which folds back and binds to the surface of the DH domain, blocking binding of RHOA to the catalytic center of the DH domain. The 2nd BRCT domain is also involved in inhibition, probably by helping to impede RHOA binding. Allosterically activated by binding of activated GTP-bound RHOA to the PH domain which stimulates the release of PH inhibition and promotes the binding of substrate RHOA to the catalytic center. Binding of phosphorylated RACGAP1 to the N-terminal BRCT domain-containing region also releases autoinhibition. Its function is as follows. Guanine nucleotide exchange factor (GEF) that catalyzes the exchange of GDP for GTP. Promotes guanine nucleotide exchange on the Rho family members of small GTPases, like RHOA, RHOC, RAC1 and CDC42. Required for signal transduction pathways involved in the regulation of cytokinesis. Component of the centralspindlin complex that serves as a microtubule-dependent and Rho-mediated signaling required for the myosin contractile ring formation during the cell cycle cytokinesis. Regulates the translocation of RHOA from the central spindle to the equatorial region. Plays a role in the control of mitotic spindle assembly; regulates the activation of CDC42 in metaphase for the process of spindle fibers attachment to kinetochores before chromosome congression. Involved in the regulation of epithelial cell polarity; participates in the formation of epithelial tight junctions in a polarity complex PARD3-PARD6-protein kinase PRKCQ-dependent manner. Plays a role in the regulation of neurite outgrowth. Inhibits phenobarbital (PB)-induced NR1I3 nuclear translocation. Stimulates the activity of RAC1 through its association with the oncogenic PARD6A-PRKCI complex in cancer cells, thereby acting to coordinately drive tumor cell proliferation and invasion. Also stimulates genotoxic stress-induced RHOB activity in breast cancer cells leading to their cell death. This chain is Protein ECT2 (Ect2), found in Mus musculus (Mouse).